Reading from the N-terminus, the 204-residue chain is FlaA locus 22.9 kDa protein (204 aa).

The tract at residues 115–140 (EKTAEDQKKSSEDHTEGSADSKASSE) is disordered.

The polypeptide is FlaA locus 22.9 kDa protein (ylxF) (Bacillus subtilis (strain 168)).